Here is a 495-residue protein sequence, read N- to C-terminus: Ribosome biogenesis protein YTM1 (495 aa).

The interval 15–97 (VKVIFTTTEP…ETTLTLQYVR (83 aa)) is ubiquitin-like (UBL) domain. 7 WD repeats span residues 129–168 (WSSA…IATS), 175–213 (GHTA…HFTG), 223–262 (GHTG…APEP), 264–295 (ASLL…LWSI), 296–337 (HTAP…STLT), 386–426 (GHAN…PATK), and 458–495 (GDGC…TEQK).

Belongs to the WD repeat WDR12/YTM1 family. In terms of assembly, component of the NOP7 complex, composed of ERB1, NOP7 and YTM1. The complex is held together by ERB1, which interacts with NOP7 via its N-terminal domain and with YTM1 via a high-affinity interaction between the seven-bladed beta-propeller domains of the 2 proteins. The NOP7 complex associates with the 66S pre-ribosome. Interacts (via UBL domain) with MDN1 (via VWFA/MIDAS domain).

Its subcellular location is the nucleus. It is found in the nucleolus. The protein localises to the nucleoplasm. Functionally, component of the NOP7 complex, which is required for maturation of the 25S and 5.8S ribosomal RNAs and formation of the 60S ribosome. This is Ribosome biogenesis protein YTM1 from Chaetomium thermophilum (strain DSM 1495 / CBS 144.50 / IMI 039719) (Thermochaetoides thermophila).